We begin with the raw amino-acid sequence, 362 residues long: Talin rod domain-containing protein 1 (362 aa).

Positions 1 to 26 are disordered; it reads MASGSAGKPTGEAASPAPASAIGGAS. A2 is modified (N-acetylalanine). The segment covering 13 to 26 has biased composition (low complexity); sequence AASPAPASAIGGAS.

May homodimerize. Interacts with F-actin.

In terms of biological role, actin-binding protein which may have an oncogenic function and regulates cell proliferation, migration and invasion in cancer cells. The chain is Talin rod domain-containing protein 1 from Homo sapiens (Human).